A 150-amino-acid polypeptide reads, in one-letter code: Endoribonuclease YbeY (150 aa).

Residues histidine 102, histidine 106, and histidine 112 each coordinate Zn(2+).

Belongs to the endoribonuclease YbeY family. The cofactor is Zn(2+).

It is found in the cytoplasm. Its function is as follows. Single strand-specific metallo-endoribonuclease involved in late-stage 70S ribosome quality control and in maturation of the 3' terminus of the 16S rRNA. The sequence is that of Endoribonuclease YbeY from Thermotoga sp. (strain RQ2).